Here is a 536-residue protein sequence, read N- to C-terminus: CBS domain-containing protein CBSCBSPB2 (536 aa).

Residues 1–23 are compositionally biased toward low complexity; it reads MTTTPTSSGRRSISSIRRTSSAS. The interval 1 to 60 is disordered; that stretch reads MTTTPTSSGRRSISSIRRTSSASKKPVLQSEESESGSGSINENTSKPDSPLAQPVSDGER. 4 consecutive CBS domains span residues 66–124, 132–187, 228–287, and 295–354; these read RLSK…LRPE, MTRN…RMEK, VTEN…LSPE, and MTPN…NNSS. The region spanning 406-489 is the PB1 domain; it reads VSSFAFKFED…KVLRLHLDFT (84 aa). The chain crosses the membrane as a helical span at residues 509–529; that stretch reads VWWQTGVLAGAIVLTSIGLFV.

The protein localises to the membrane. This chain is CBS domain-containing protein CBSCBSPB2 (CBSCBSPB2), found in Arabidopsis thaliana (Mouse-ear cress).